A 157-amino-acid polypeptide reads, in one-letter code: Endoribonuclease YbeY (157 aa).

Zn(2+) is bound by residues His111, His115, and His121. A disordered region spans residues 136-157 (ELLAELGHPDPYADDETDSITH). The span at 147 to 157 (YADDETDSITH) shows a compositional bias: acidic residues.

This sequence belongs to the endoribonuclease YbeY family. Zn(2+) serves as cofactor.

The protein localises to the cytoplasm. In terms of biological role, single strand-specific metallo-endoribonuclease involved in late-stage 70S ribosome quality control and in maturation of the 3' terminus of the 16S rRNA. The sequence is that of Endoribonuclease YbeY from Pseudomonas putida (strain ATCC 700007 / DSM 6899 / JCM 31910 / BCRC 17059 / LMG 24140 / F1).